The following is a 208-amino-acid chain: N-hydroxyputrescine acetyltransferase (208 aa).

This sequence belongs to the IucB family.

It carries out the reaction N-hydroxyputrescine + acetyl-CoA = N(1)-acetyl-N(1)-hydroxyputrescine + CoA. It functions in the pathway siderophore biosynthesis. In terms of biological role, N-acetyltransferase involved in the biosynthesis of fimsbactin A, the major siderophore produced by A.baumannii. Catalyzes the acetylation of N-hydroxyputrescine to form N(1)-acetyl-N(1)-hydroxyputrescine (ahPutr). The sequence is that of N-hydroxyputrescine acetyltransferase from Acinetobacter baumannii (strain ATCC 17978 / DSM 105126 / CIP 53.77 / LMG 1025 / NCDC KC755 / 5377).